A 1044-amino-acid chain; its full sequence is Elongation factor 3B (1044 aa).

Serine 2 is subject to N-acetylserine. Residues 5 to 42 (QQSITVLEELFRKLETATSETREGISSELSSFLNGNII) form an HEAT 1 repeat. ADP is bound by residues isoleucine 42, histidine 44, and serine 83. HEAT repeat units follow at residues 86–123 (PYIV…AVNP), 124–162 (VAVK…AAKE), 166–203 (LRMP…TVDN), 205–241 (DIER…EVTP), 242–279 (ATLS…LVED), and 285–323 (PFLG…VGNV). 2 positions are modified to N6,N6,N6-trimethyllysine: lysine 187 and lysine 196. ADP-binding residues include threonine 392, histidine 396, and glutamate 397. 2 ABC transporter domains span residues 426–641 (DEGE…YYEL) and 667–993 (VKVS…KKEE). An ADP-binding site is contributed by asparagine 703. Lysine 789 bears the N6,N6,N6-trimethyllysine mark. Residues glutamate 922, asparagine 925, and histidine 951 each coordinate ADP. Threonine 972 carries the post-translational modification Phosphothreonine. Serine 974 carries the phosphoserine modification. Residues 975–1044 (GHNWVAGQGA…DEYVSSDEDF (70 aa)) are disordered. The span at 987 to 999 (RIEKKEEEGDKFD) shows a compositional bias: basic and acidic residues. The span at 1020–1031 (RKKKKERMKKKK) shows a compositional bias: basic residues. A phosphoserine mark is found at serine 1039 and serine 1040.

This sequence belongs to the ABC transporter superfamily. ABCF family. EF3 subfamily. In terms of assembly, monomer.

Its subcellular location is the cytoplasm. The catalysed reaction is ATP + H2O = ADP + phosphate + H(+). It participates in protein biosynthesis; polypeptide chain elongation. Ribosome-dependent ATPase that promotes the translation of proteins required for detoxification of reactive oxygen species. Required for the ATP-dependent release of deacylated tRNA from the ribosomal E-site during protein biosynthesis. Stimulates the eEF1A-dependent binding of aminoacyl-tRNA to the ribosomal A-site, which has reduced affinity for tRNA as long as the E-site is occupied. Assists translation termination by stimulating the release of nascent protein from the ribosome by release factors. This Saccharomyces cerevisiae (strain ATCC 204508 / S288c) (Baker's yeast) protein is Elongation factor 3B.